We begin with the raw amino-acid sequence, 473 residues long: Keratin, type I cytoskeletal 16 (473 aa).

A head region spans residues methionine 1–serine 116. Residues glutamate 117–tryptophan 152 form a coil 1A region. The IF rod domain occupies glutamate 117–leucine 428. The interval tyrosine 153–threonine 170 is linker 1. The segment at isoleucine 171 to leucine 262 is coil 1B. The linker 12 stretch occupies residues arginine 263–isoleucine 285. A coil 2 region spans residues leucine 286–glutamate 424. Residues aspartate 425–serine 473 are tail. Residues leucine 428–serine 473 form a disordered region. Composition is skewed to low complexity over residues serine 429–serine 452 and glutamine 462–serine 473.

It belongs to the intermediate filament family. Heterodimer of a type I and a type II keratin. KRT16 associates with KRT6 isomers (KRT6A or KRT6B). Interacts with TCHP. Interacts with TRADD. Expressed in the corneal epithelium (at protein level).

Its function is as follows. Epidermis-specific type I keratin that plays a key role in skin. Acts as a regulator of innate immunity in response to skin barrier breach: required for some inflammatory checkpoint for the skin barrier maintenance. In Homo sapiens (Human), this protein is Keratin, type I cytoskeletal 16 (KRT16).